The primary structure comprises 672 residues: Threonine--tRNA ligase (672 aa).

One can recognise a TGS domain in the interval 1–64 (MTELLKISLP…EGDAELALIT (64 aa)). A catalytic region spans residues 257–566 (DHRKLGREMD…LIEHFAGRLP (310 aa)). 3 residues coordinate Zn(2+): Cys362, His413, and His543.

It belongs to the class-II aminoacyl-tRNA synthetase family. Homodimer. Requires Zn(2+) as cofactor.

The protein localises to the cytoplasm. The catalysed reaction is tRNA(Thr) + L-threonine + ATP = L-threonyl-tRNA(Thr) + AMP + diphosphate + H(+). Catalyzes the attachment of threonine to tRNA(Thr) in a two-step reaction: L-threonine is first activated by ATP to form Thr-AMP and then transferred to the acceptor end of tRNA(Thr). Also edits incorrectly charged L-seryl-tRNA(Thr). The protein is Threonine--tRNA ligase of Erythrobacter litoralis (strain HTCC2594).